Reading from the N-terminus, the 547-residue chain is CTP synthase (547 aa).

An amidoligase domain region spans residues methionine 1 to leucine 266. Serine 13 provides a ligand contact to CTP. Serine 13 contacts UTP. Serine 14–isoleucine 19 contributes to the ATP binding site. Residue tyrosine 54 participates in L-glutamine binding. Position 71 (aspartate 71) interacts with ATP. Aspartate 71 and glutamate 141 together coordinate Mg(2+). CTP-binding positions include aspartate 148–glutamate 150, lysine 187–glutamine 192, and lysine 223. UTP contacts are provided by residues lysine 187–glutamine 192 and lysine 223. One can recognise a Glutamine amidotransferase type-1 domain in the interval proline 291–alanine 533. Glycine 353 serves as a coordination point for L-glutamine. Cysteine 380 (nucleophile; for glutamine hydrolysis) is an active-site residue. L-glutamine-binding positions include leucine 381–glutamine 384, glutamate 404, and arginine 461. Catalysis depends on residues histidine 506 and glutamate 508.

This sequence belongs to the CTP synthase family. Homotetramer.

It carries out the reaction UTP + L-glutamine + ATP + H2O = CTP + L-glutamate + ADP + phosphate + 2 H(+). It catalyses the reaction L-glutamine + H2O = L-glutamate + NH4(+). The enzyme catalyses UTP + NH4(+) + ATP = CTP + ADP + phosphate + 2 H(+). It participates in pyrimidine metabolism; CTP biosynthesis via de novo pathway; CTP from UDP: step 2/2. With respect to regulation, allosterically activated by GTP, when glutamine is the substrate; GTP has no effect on the reaction when ammonia is the substrate. The allosteric effector GTP functions by stabilizing the protein conformation that binds the tetrahedral intermediate(s) formed during glutamine hydrolysis. Inhibited by the product CTP, via allosteric rather than competitive inhibition. In terms of biological role, catalyzes the ATP-dependent amination of UTP to CTP with either L-glutamine or ammonia as the source of nitrogen. Regulates intracellular CTP levels through interactions with the four ribonucleotide triphosphates. In Chloroflexus aggregans (strain MD-66 / DSM 9485), this protein is CTP synthase.